The following is a 466-amino-acid chain: ATP synthase subunit beta (466 aa).

Residue 153–160 (GGAGVGKT) participates in ATP binding.

Belongs to the ATPase alpha/beta chains family. F-type ATPases have 2 components, CF(1) - the catalytic core - and CF(0) - the membrane proton channel. CF(1) has five subunits: alpha(3), beta(3), gamma(1), delta(1), epsilon(1). CF(0) has three main subunits: a(1), b(2) and c(9-12). The alpha and beta chains form an alternating ring which encloses part of the gamma chain. CF(1) is attached to CF(0) by a central stalk formed by the gamma and epsilon chains, while a peripheral stalk is formed by the delta and b chains.

Its subcellular location is the cell membrane. It carries out the reaction ATP + H2O + 4 H(+)(in) = ADP + phosphate + 5 H(+)(out). Functionally, produces ATP from ADP in the presence of a proton gradient across the membrane. The catalytic sites are hosted primarily by the beta subunits. In Oenococcus oeni (strain ATCC BAA-331 / PSU-1), this protein is ATP synthase subunit beta.